We begin with the raw amino-acid sequence, 187 residues long: UPF0301 protein Ppha_2142 (187 aa).

Belongs to the UPF0301 (AlgH) family.

The protein is UPF0301 protein Ppha_2142 of Pelodictyon phaeoclathratiforme (strain DSM 5477 / BU-1).